A 580-amino-acid chain; its full sequence is Type 3 secretion system translocon protein SctE (580 aa).

2 helical membrane-spanning segments follow: residues 313 to 333 (ILGALLTIVSVVAAAFSGGAS) and 399 to 419 (IGSILGAIAGALVLVAAVVLV).

This sequence belongs to the SctE/SipB/YopB family. The core secretion machinery of the T3SS is composed of approximately 20 different proteins, including cytoplasmic components, a base, an export apparatus and a needle. This subunit is involved in the formation of a pore, called the translocon, in host membrane.

Its subcellular location is the secreted. The protein localises to the host membrane. Component of the type III secretion system (T3SS), also called injectisome, which is used to inject bacterial effector proteins into eukaryotic host cells. IpaB/SctE and IpaC/SctB are inserted into the host membrane where they form a pore and allow the translocation of effector proteins into the cytosol of target cells. This Shigella dysenteriae protein is Type 3 secretion system translocon protein SctE.